A 274-amino-acid polypeptide reads, in one-letter code: Diaminopimelate epimerase (274 aa).

Substrate contacts are provided by asparagine 11, glutamine 44, and asparagine 64. The Proton donor role is filled by cysteine 73. Residues 74–75, asparagine 157, asparagine 190, and 208–209 each bind substrate; these read GN and ER. Cysteine 217 acts as the Proton acceptor in catalysis. 218-219 contributes to the substrate binding site; sequence GS.

The protein belongs to the diaminopimelate epimerase family. In terms of assembly, homodimer.

It is found in the cytoplasm. The enzyme catalyses (2S,6S)-2,6-diaminopimelate = meso-2,6-diaminopimelate. It functions in the pathway amino-acid biosynthesis; L-lysine biosynthesis via DAP pathway; DL-2,6-diaminopimelate from LL-2,6-diaminopimelate: step 1/1. Its function is as follows. Catalyzes the stereoinversion of LL-2,6-diaminopimelate (L,L-DAP) to meso-diaminopimelate (meso-DAP), a precursor of L-lysine and an essential component of the bacterial peptidoglycan. The chain is Diaminopimelate epimerase from Yersinia enterocolitica serotype O:8 / biotype 1B (strain NCTC 13174 / 8081).